The following is a 372-amino-acid chain: Rab9 effector protein with kelch motifs (372 aa).

5 Kelch repeats span residues 49 to 95, 100 to 146, 151 to 200, 204 to 250, and 254 to 303; these read KVFI…FIPS, RIWV…TSSA, QLYV…VMVA, KLFI…SAVA, and HVYI…IIPW. Serine 133 bears the Phosphoserine mark. The interval 314-340 is disordered; it reads SNSLTLNHEAEKEDSADKVMSHSGDSH. A compositionally biased stretch (basic and acidic residues) spans 321–340; that stretch reads HEAEKEDSADKVMSHSGDSH.

Interacts with PIKFYVE; the interaction recruits RABEPK to the endosomal membrane. Interacts with RAB9 in its GTP-bound conformation. In terms of processing, phosphorylated on Ser residues by PIKFYVE.

It localises to the cytoplasm. Its subcellular location is the endosome membrane. Functionally, rab9 effector required for endosome to trans-Golgi network (TGN) transport. In Homo sapiens (Human), this protein is Rab9 effector protein with kelch motifs.